Reading from the N-terminus, the 213-residue chain is Orotate phosphoribosyltransferase (213 aa).

Position 26 (lysine 26) interacts with 5-phospho-alpha-D-ribose 1-diphosphate. 34-35 contributes to the orotate binding site; the sequence is FF. 5-phospho-alpha-D-ribose 1-diphosphate-binding positions include 72–73, arginine 99, lysine 100, lysine 103, histidine 105, and 124–132; these read YK and DDVITAGTA. Residues threonine 128 and arginine 156 each contribute to the orotate site.

This sequence belongs to the purine/pyrimidine phosphoribosyltransferase family. PyrE subfamily. In terms of assembly, homodimer. Requires Mg(2+) as cofactor.

The catalysed reaction is orotidine 5'-phosphate + diphosphate = orotate + 5-phospho-alpha-D-ribose 1-diphosphate. The protein operates within pyrimidine metabolism; UMP biosynthesis via de novo pathway; UMP from orotate: step 1/2. Functionally, catalyzes the transfer of a ribosyl phosphate group from 5-phosphoribose 1-diphosphate to orotate, leading to the formation of orotidine monophosphate (OMP). The chain is Orotate phosphoribosyltransferase from Cronobacter sakazakii (strain ATCC BAA-894) (Enterobacter sakazakii).